A 480-amino-acid polypeptide reads, in one-letter code: Phosphoglucosamine mutase (480 aa).

Residues 1-41 are disordered; that stretch reads MPKHTKKDPREGAPSATGEPQKQAAGRKLFGTDGVRGVANQ. The active-site Phosphoserine intermediate is S127. S127, D269, D271, and D273 together coordinate Mg(2+). Position 127 is a phosphoserine (S127).

This sequence belongs to the phosphohexose mutase family. Mg(2+) serves as cofactor. Activated by phosphorylation.

The catalysed reaction is alpha-D-glucosamine 1-phosphate = D-glucosamine 6-phosphate. In terms of biological role, catalyzes the conversion of glucosamine-6-phosphate to glucosamine-1-phosphate. The sequence is that of Phosphoglucosamine mutase from Sorangium cellulosum (strain So ce56) (Polyangium cellulosum (strain So ce56)).